The following is a 212-amino-acid chain: ATP synthase F(0) complex subunit a (212 aa).

The next 6 helical transmembrane spans lie at 3 to 23 (MMGI…MFTS), 58 to 78 (WAAM…LGLL), 87 to 107 (QLSM…LTGL), 128 to 148 (IPLL…ALGV), 154 to 174 (LTAG…LMPT), and 179 to 199 (ALST…VAMI).

Belongs to the ATPase A chain family. As to quaternary structure, component of the ATP synthase complex composed at least of ATP5F1A/subunit alpha, ATP5F1B/subunit beta, ATP5MC1/subunit c (homooctomer), MT-ATP6/subunit a, MT-ATP8/subunit 8, ATP5ME/subunit e, ATP5MF/subunit f, ATP5MG/subunit g, ATP5MK/subunit k, ATP5MJ/subunit j, ATP5F1C/subunit gamma, ATP5F1D/subunit delta, ATP5F1E/subunit epsilon, ATP5PF/subunit F6, ATP5PB/subunit b, ATP5PD/subunit d, ATP5PO/subunit OSCP. ATP synthase complex consists of a soluble F(1) head domain (subunits alpha(3) and beta(3)) - the catalytic core - and a membrane F(0) domain - the membrane proton channel (subunits c, a, 8, e, f, g, k and j). These two domains are linked by a central stalk (subunits gamma, delta, and epsilon) rotating inside the F1 region and a stationary peripheral stalk (subunits F6, b, d, and OSCP). Interacts with DNAJC30; interaction is direct.

The protein resides in the mitochondrion inner membrane. It catalyses the reaction H(+)(in) = H(+)(out). Subunit a, of the mitochondrial membrane ATP synthase complex (F(1)F(0) ATP synthase or Complex V) that produces ATP from ADP in the presence of a proton gradient across the membrane which is generated by electron transport complexes of the respiratory chain. ATP synthase complex consist of a soluble F(1) head domain - the catalytic core - and a membrane F(1) domain - the membrane proton channel. These two domains are linked by a central stalk rotating inside the F(1) region and a stationary peripheral stalk. During catalysis, ATP synthesis in the catalytic domain of F(1) is coupled via a rotary mechanism of the central stalk subunits to proton translocation. With the subunit c (ATP5MC1), forms the proton-conducting channel in the F(0) domain, that contains two crucial half-channels (inlet and outlet) that facilitate proton movement from the mitochondrial intermembrane space (IMS) into the matrix. Protons are taken up via the inlet half-channel and released through the outlet half-channel, following a Grotthuss mechanism. This chain is ATP synthase F(0) complex subunit a, found in Tropidurus montanus (Lizard).